The following is a 433-amino-acid chain: Ribosomal RNA small subunit methyltransferase B (433 aa).

S-adenosyl-L-methionine-binding positions include 254–260, D277, D303, and D322; that span reads CAAPGGK. C375 acts as the Nucleophile in catalysis.

Belongs to the class I-like SAM-binding methyltransferase superfamily. RsmB/NOP family.

It localises to the cytoplasm. The catalysed reaction is cytidine(967) in 16S rRNA + S-adenosyl-L-methionine = 5-methylcytidine(967) in 16S rRNA + S-adenosyl-L-homocysteine + H(+). Specifically methylates the cytosine at position 967 (m5C967) of 16S rRNA. The polypeptide is Ribosomal RNA small subunit methyltransferase B (Sodalis glossinidius (strain morsitans)).